The following is a 141-amino-acid chain: Large ribosomal subunit protein uL11 (141 aa).

The protein belongs to the universal ribosomal protein uL11 family. In terms of assembly, part of the ribosomal stalk of the 50S ribosomal subunit. Interacts with L10 and the large rRNA to form the base of the stalk. L10 forms an elongated spine to which L12 dimers bind in a sequential fashion forming a multimeric L10(L12)X complex. In terms of processing, one or more lysine residues are methylated.

Its function is as follows. Forms part of the ribosomal stalk which helps the ribosome interact with GTP-bound translation factors. The sequence is that of Large ribosomal subunit protein uL11 from Tropheryma whipplei (strain TW08/27) (Whipple's bacillus).